The chain runs to 404 residues: Cysteine desulfurase IscS (404 aa).

Pyridoxal 5'-phosphate-binding positions include 75 to 76 (AT), N155, Q183, and 203 to 205 (TGH). At K206 the chain carries N6-(pyridoxal phosphate)lysine. Position 243 (T243) interacts with pyridoxal 5'-phosphate. Residue C328 is the Cysteine persulfide intermediate of the active site. Residue C328 coordinates [2Fe-2S] cluster.

This sequence belongs to the class-V pyridoxal-phosphate-dependent aminotransferase family. NifS/IscS subfamily. Homodimer. Forms a heterotetramer with IscU, interacts with other sulfur acceptors. Pyridoxal 5'-phosphate is required as a cofactor.

The protein resides in the cytoplasm. It catalyses the reaction (sulfur carrier)-H + L-cysteine = (sulfur carrier)-SH + L-alanine. Its pathway is cofactor biosynthesis; iron-sulfur cluster biosynthesis. Its function is as follows. Master enzyme that delivers sulfur to a number of partners involved in Fe-S cluster assembly, tRNA modification or cofactor biosynthesis. Catalyzes the removal of elemental sulfur atoms from cysteine to produce alanine. Functions as a sulfur delivery protein for Fe-S cluster synthesis onto IscU, an Fe-S scaffold assembly protein, as well as other S acceptor proteins. This chain is Cysteine desulfurase IscS, found in Enterobacter sp. (strain 638).